Here is a 360-residue protein sequence, read N- to C-terminus: uncharacterized protein (360 aa).

To P.multocida PM1082.

This is an uncharacterized protein from Pasteurella multocida (strain Pm70).